Here is a 579-residue protein sequence, read N- to C-terminus: Carotenoid-cleaving dioxygenase, mitochondrial (579 aa).

Fe cation-binding residues include His226, His286, His357, and His573.

This sequence belongs to the carotenoid oxygenase family. Fe(2+) is required as a cofactor. As to expression, highly expressed in retinal pigment epithelium. Also expressed in stomach, small intestine, liver, testis, kidney, adrenal gland, pancreas, heart, skeletal muscle and prostate (at protein level).

Its subcellular location is the mitochondrion. It carries out the reaction all-trans-beta-carotene + O2 = beta-ionone + all-trans-10'-apo-beta-carotenal. The catalysed reaction is 5-cis-lycopene + O2 = 5-cis-10'-apo-lycopenal + (3E,5E)-6,10-dimethylundeca-3,5,9-trien-2-one. The enzyme catalyses 13-cis-lycopene + O2 = 13-cis-10'-apo-lycopenal + (3E,5E)-6,10-dimethylundeca-3,5,9-trien-2-one. It catalyses the reaction lutein + O2 = (3R,6R)-hydroxy-alpha-ionone + (3R)-3-hydroxy-10'-apo-beta-carotenal. It carries out the reaction lutein + O2 = (3R,6R)-3-hydroxy-10'-apo-alpha-carotenal + (3R)-hydroxy-beta-ionone. The catalysed reaction is all-trans-zeaxanthin + 2 O2 = 4,9-dimethyldodeca-2,4,6,8,10-pentaenedial + 2 (3R)-hydroxy-beta-ionone. The enzyme catalyses all-trans-zeaxanthin + O2 = (3R)-3-hydroxy-10'-apo-beta-carotenal + (3R)-hydroxy-beta-ionone. It catalyses the reaction beta-cryptoxanthin + O2 = all-trans-10'-apo-beta-carotenal + (3R)-hydroxy-beta-ionone. It carries out the reaction all-trans-10'-apo-beta-carotenal + O2 = beta-ionone + 4,9-dimethyldodeca-2,4,6,8,10-pentaenedial. The catalysed reaction is (3R)-3-hydroxy-10'-apo-beta-carotenal + O2 = 4,9-dimethyldodeca-2,4,6,8,10-pentaenedial + (3R)-hydroxy-beta-ionone. The enzyme catalyses (3R,6R)-3-hydroxy-10'-apo-alpha-carotenal + O2 = (3R,6R)-hydroxy-alpha-ionone + 4,9-dimethyldodeca-2,4,6,8,10-pentaenedial. In terms of biological role, broad specificity mitochondrial dioxygenase that mediates the asymmetric oxidative cleavage of carotenoids. Cleaves carotenes (pure hydrocarbon carotenoids) such as all-trans-beta-carotene and lycopene as well as xanthophylls (oxygenated carotenoids) such as zeaxanthin, lutein and beta-cryptoxanthin at both the 9,10 and the 9',10' carbon-carbon double bond. Through its function in carotenoids metabolism regulates oxidative stress and the production of important signaling molecules. This Homo sapiens (Human) protein is Carotenoid-cleaving dioxygenase, mitochondrial.